The chain runs to 336 residues: Glycerol-3-phosphate dehydrogenase [NAD(P)+] (336 aa).

Positions 14, 15, 35, 36, and 109 each coordinate NADPH. 2 residues coordinate sn-glycerol 3-phosphate: Lys-109 and Gly-139. Ala-143 is a binding site for NADPH. Lys-194, Asp-247, Ser-257, Arg-258, and Asn-259 together coordinate sn-glycerol 3-phosphate. The active-site Proton acceptor is Lys-194. Arg-258 contributes to the NADPH binding site. Glu-284 is a binding site for NADPH.

This sequence belongs to the NAD-dependent glycerol-3-phosphate dehydrogenase family.

The protein resides in the cytoplasm. The catalysed reaction is sn-glycerol 3-phosphate + NAD(+) = dihydroxyacetone phosphate + NADH + H(+). It catalyses the reaction sn-glycerol 3-phosphate + NADP(+) = dihydroxyacetone phosphate + NADPH + H(+). It participates in membrane lipid metabolism; glycerophospholipid metabolism. In terms of biological role, catalyzes the reduction of the glycolytic intermediate dihydroxyacetone phosphate (DHAP) to sn-glycerol 3-phosphate (G3P), the key precursor for phospholipid synthesis. This Streptomyces griseus subsp. griseus (strain JCM 4626 / CBS 651.72 / NBRC 13350 / KCC S-0626 / ISP 5235) protein is Glycerol-3-phosphate dehydrogenase [NAD(P)+].